The chain runs to 1564 residues: Nucleoporin nup184 (1564 aa).

Its subcellular location is the nucleus. It is found in the nuclear pore complex. In terms of biological role, interacts with pom152 in the core structure of the nuclear pore complex (NPC). Involved in the export of mRNA. This Schizosaccharomyces pombe (strain 972 / ATCC 24843) (Fission yeast) protein is Nucleoporin nup184 (nup184).